A 370-amino-acid polypeptide reads, in one-letter code: 4-hydroxy-3-methylbut-2-en-1-yl diphosphate synthase (flavodoxin) (370 aa).

[4Fe-4S] cluster contacts are provided by Cys-270, Cys-273, Cys-305, and Glu-312.

Belongs to the IspG family. It depends on [4Fe-4S] cluster as a cofactor.

It catalyses the reaction (2E)-4-hydroxy-3-methylbut-2-enyl diphosphate + oxidized [flavodoxin] + H2O + 2 H(+) = 2-C-methyl-D-erythritol 2,4-cyclic diphosphate + reduced [flavodoxin]. It functions in the pathway isoprenoid biosynthesis; isopentenyl diphosphate biosynthesis via DXP pathway; isopentenyl diphosphate from 1-deoxy-D-xylulose 5-phosphate: step 5/6. In terms of biological role, converts 2C-methyl-D-erythritol 2,4-cyclodiphosphate (ME-2,4cPP) into 1-hydroxy-2-methyl-2-(E)-butenyl 4-diphosphate. This Hahella chejuensis (strain KCTC 2396) protein is 4-hydroxy-3-methylbut-2-en-1-yl diphosphate synthase (flavodoxin).